The sequence spans 208 residues: Guanylate kinase (208 aa).

The 182-residue stretch at 4–185 (GNLYILSAPS…TLKDLQSILQ (182 aa)) folds into the Guanylate kinase-like domain. 11–18 (APSGAGKS) lines the ATP pocket.

It belongs to the guanylate kinase family.

It is found in the cytoplasm. It catalyses the reaction GMP + ATP = GDP + ADP. Its function is as follows. Essential for recycling GMP and indirectly, cGMP. The sequence is that of Guanylate kinase from Haemophilus influenzae (strain 86-028NP).